The following is a 288-amino-acid chain: Executioner caspase (288 aa).

Residue C131 is part of the active site.

The protein belongs to the peptidase C14A family.

May induce host cell apoptosis and contribute of the establishment of a special cell cleavage process in which apoppotic bodies are rescued by the virus and differentiate to form large vesicles in which virion assembles. The sequence is that of Executioner caspase from Spodoptera frugiperda ascovirus 1a (SfAV-1a).